The chain runs to 189 residues: MAGKFTNMRYDNQAYNEEIRRSTDPLLYKLDSNYSVNCSPCFAAHGPIGGHNNSVAIGNQIDVDSVLRGVGRINSKSNQQQAPESLNQYTMYTPRECSPSLESHHSRFSHPAHDIRGLNVPDMRLGYPLHDPQCQIFEDFGVNTRLQAKDNHRAVWQQPMDQKSVYPKARPGREKNCTVSVNCTYAPYS.

It belongs to the mimivirus R457/R459 family.

The protein localises to the virion. This is an uncharacterized protein from Acanthamoeba polyphaga mimivirus (APMV).